Here is a 207-residue protein sequence, read N- to C-terminus: Probable HTH-type transcriptional regulator YttP (207 aa).

An HTH tetR-type domain is found at 3-63 (VSTKDKIIES…HLVSEFYEGY (61 aa)). The H-T-H motif DNA-binding region spans 26-45 (SVREIAKSADVNVAHISYYF).

The polypeptide is Probable HTH-type transcriptional regulator YttP (yttP) (Bacillus subtilis (strain 168)).